Here is a 365-residue protein sequence, read N- to C-terminus: BTB/POZ and TAZ domain-containing protein 1 (365 aa).

The BTB domain maps to 25-96 (TDVEIITSGR…LYSPSVTENE (72 aa)). The Nuclear localization signal motif lies at 193-202 (RKKRRRRHRR). The segment at 205–304 (NLYLQLSEAM…SESCRVPLCR (100 aa)) adopts a TAZ-type zinc-finger fold. Residues 315–338 (KMVEDTKWKVLVRRVASAKAMSSL) form a caM-binding region.

Interacts with CUL3A. Interacts with GTE9/BET9 and GTE11/BET10 through the BTB domain. In terms of tissue distribution, preferentially expressed in young leaves, roots and stems.

Its subcellular location is the nucleus. It is found in the cytoplasm. It participates in protein modification; protein ubiquitination. May act as a substrate-specific adapter of an E3 ubiquitin-protein ligase complex (CUL3-RBX1-BTB) which mediates the ubiquitination and subsequent proteasomal degradation of target proteins. Also targeted for degradation by the 26S proteasome pathway. May be involved in gametophyte development. The protein is BTB/POZ and TAZ domain-containing protein 1 (BT1) of Arabidopsis thaliana (Mouse-ear cress).